A 1255-amino-acid chain; its full sequence is Structural polyprotein (1255 aa).

The interval 1-33 is necessary for nucleocapsid assembly and virus assembly; that stretch reads MFPFQPMYPMQPMPYRNPFAAPRRPWFPRTDPF. The segment at 33-68 is host transcription inhibition; it reads FLAMQVQELTRSMANLTFKQRRDAPPEGPPAKKPKR. The Supraphysiological nuclear export signal motif lies at 41 to 48; it reads LTRSMANL. The interval 44–119 is disordered; that stretch reads SMANLTFKQR…KKPGKRQRMV (76 aa). A Nuclear localization signal motif is present at residues 64 to 68; that stretch reads KKPKR. Residues 80–92 show a composition bias toward basic residues; sequence GKKKKNQGKKKAK. The tract at residues 91 to 127 is binding to the viral RNA; it reads AKTGPPNPKAQSGNKKKPNKKPGKRQRMVMKLESDKT. Position 93 is a phosphothreonine (Thr-93). Residues 104 to 118 are compositionally biased toward basic residues; sequence NKKKPNKKPGKRQRM. The tract at residues 112–126 is ribosome-binding; the sequence is PGKRQRMVMKLESDK. A Phosphoserine modification is found at Ser-124. Residues 126–275 form the Peptidase S3 domain; sequence KTFPIMLEGK…KYTPENCEQW (150 aa). Thr-127 carries the phosphothreonine modification. His-152 acts as the Charge relay system in catalysis. The interaction with spike glycoprotein E2 stretch occupies residues 168–173; it reads KKASKY. Active-site charge relay system residues include Asp-174 and Ser-226. The interaction with spike glycoprotein E2 stretch occupies residues 260–264; it reads EKGVT. The functions as an uncleaved signal peptide for the precursor of protein E3/E2 stretch occupies residues 276 to 287; the sequence is SLVTTMCLLANV. Residues 276-701 are Extracellular-facing; sequence SLVTTMCLLA…HYYHRYPMST (426 aa). 7 cysteine pairs are disulfide-bonded: Cys-282/Cys-291, Cys-353/Cys-457, Cys-356/Cys-361, Cys-424/Cys-438, Cys-485/Cys-600, Cys-534/Cys-560, and Cys-536/Cys-554. The N-linked (GlcNAc...) asparagine; by host glycan is linked to Asn-286. Asn-652 carries an N-linked (GlcNAc...) asparagine; by host glycan. Residues 702–722 form a helical membrane-spanning segment; it reads ILGLSICAAIVTVSVAASTWL. Topologically, residues 723 to 757 are cytoplasmic; the sequence is FCKSRVSCLTPYRLTPNARMPLCLAVLCCARTARA. Positions 725–729 are interaction with the capsid protein; it reads KSRVS. S-palmitoyl cysteine; by host attachment occurs at residues Cys-730, Cys-750, and Cys-751. A transient transmembrane before p62-6K protein processing region spans residues 730–750; it reads CLTPYRLTPNARMPLCLAVLC. Cys-730 and Cys-751 are disulfide-bonded. Topologically, residues 758–769 are extracellular; sequence ETTWESLDHLWN. Residues 770-790 traverse the membrane as a helical segment; it reads NNQQMFWIQLLIPLAALIVVT. A topological domain (cytoplasmic) is located at residue Arg-791. Residues 792-812 form a helical membrane-spanning segment; that stretch reads LLKCVCCVVPFLVVAGAAGAG. At 813-1225 the chain is on the extracellular side; it reads AYEHATTMPS…SKTAWTWLTS (413 aa). Intrachain disulfides connect Cys-862-Cys-927, Cys-875-Cys-907, Cys-876-Cys-909, and Cys-881-Cys-891. An E1 fusion peptide loop region spans residues 897–914; it reads VYPFMWGGAYCFCDTENT. N-linked (GlcNAc...) asparagine; by host glycans are attached at residues Asn-947 and Asn-1083. Intrachain disulfides connect Cys-1072–Cys-1084, Cys-1114–Cys-1189, Cys-1119–Cys-1193, and Cys-1141–Cys-1183. Residues 1226 to 1246 form a helical membrane-spanning segment; sequence LLGGSAVIIIIGLVLATIVAM. The Cytoplasmic portion of the chain corresponds to 1247-1255; the sequence is YVLTNQKHN.

Homodimer. Homomultimer. Interacts with host karyopherin KPNA4; this interaction allows the nuclear import of the viral capsid protein. Interacts with spike glycoprotein E2. Interacts with host IRAK1; the interaction leads to inhibition of IRAK1-dependent signaling. Part of a tetrameric complex composed of host CRM1, host importin alpha/beta dimer and the viral capsid; this complex blocks the receptor-mediated transport through the nuclear pore. Interacts with host phosphatase PPP1CA; this interaction dephosphorylates the capsid protein, which increases its ability to bind to the viral genome. As to quaternary structure, the precursor of protein E3/E2 and E1 form a heterodimer shortly after synthesis. In terms of assembly, interacts with spike glycoprotein E2. The precursor of protein E3/E2 and E1 form a heterodimer shortly after synthesis. Processing of the precursor of protein E3/E2 into E2 and E3 results in a heterodimer of the spike glycoproteins E2 and E1. Spike at virion surface are constituted of three E2-E1 heterodimers. After target cell attachment and endocytosis, E1 change conformation to form homotrimers. Interacts with 6K protein. Interacts with host LDLRAD3; this interaction mediates viral entry to the host cell. Interacts with spike glycoprotein E1. Processing of the precursor of protein E3/E2 into E2 and E3 results in a heterodimer of the spike glycoproteins E2 and E1. Spike at virion surface are constituted of a trimer of E2-E1 heterodimers. Interacts with 6K protein. Interacts with host LDLRAD3; this interaction mediates viral entry to the host cell. As to quaternary structure, oligomer. Interacts with spike glycoprotein E1. Interacts with spike glycoprotein E2. In terms of processing, structural polyprotein: Specific enzymatic cleavages in vivo yield mature proteins. Capsid protein is auto-cleaved during polyprotein translation, unmasking a signal peptide at the N-terminus of the precursor of E3/E2. The remaining polyprotein is then targeted to the host endoplasmic reticulum, where host signal peptidase cleaves it into pE2, 6K and E1 proteins. pE2 is further processed to mature E3 and E2 by host furin in trans-Golgi vesicle. Post-translationally, phosphorylated on serine and threonine residues. Palmitoylated via thioester bonds. These palmitoylations may induce disruption of the C-terminus transmembrane. This would result in the reorientation of E2 C-terminus from lumenal to cytoplasmic side. In terms of processing, N-glycosylated. Post-translationally, palmitoylated via thioester bonds.

The protein resides in the virion. The protein localises to the host cytoplasm. Its subcellular location is the host cell membrane. It localises to the host nucleus. It is found in the virion membrane. The protein resides in the host Golgi apparatus. The protein localises to the host trans-Golgi network. Its subcellular location is the host endoplasmic reticulum. It catalyses the reaction Autocatalytic release of the core protein from the N-terminus of the togavirus structural polyprotein by hydrolysis of a -Trp-|-Ser- bond.. In terms of biological role, forms an icosahedral capsid with a T=4 symmetry composed of 240 copies of the capsid protein surrounded by a lipid membrane through which penetrate 80 spikes composed of trimers of E1-E2 heterodimers. The capsid protein binds to the viral RNA genome at a site adjacent to a ribosome binding site for viral genome translation following genome release. Possesses a protease activity that results in its autocatalytic cleavage from the nascent structural protein. Following its self-cleavage, the capsid protein transiently associates with ribosomes, and within several minutes the protein binds to viral RNA and rapidly assembles into icosahedric core particles. The resulting nucleocapsid eventually associates with the cytoplasmic domain of the spike glycoprotein E2 at the cell membrane, leading to budding and formation of mature virions. In case of infection, new virions attach to target cells and after clathrin-mediated endocytosis their membrane fuses with the host endosomal membrane. This leads to the release of the nucleocapsid into the cytoplasm, followed by an uncoating event necessary for the genomic RNA to become accessible. The uncoating might be triggered by the interaction of capsid proteins with ribosomes. Binding of ribosomes would release the genomic RNA since the same region is genomic RNA-binding and ribosome-binding. Specifically inhibits interleukin-1 receptor-associated kinase 1/IRAK1-dependent signaling during viral entry, representing a means by which the alphaviruses may evade innate immune detection and activation prior to viral gene expression. Inhibits host transcription. Forms a tetrameric complex with XPO1/CRM1 and the nuclear import receptor importin. This complex blocks the central channel of host nuclear pores thereby inhibiting the receptor-mediated nuclear transport and thus the host mRNA and rRNA transcription. The inhibition of transcription is linked to a cytopathic effect on the host cell. Its function is as follows. Provides the signal sequence for the translocation of the precursor of protein E3/E2 to the host endoplasmic reticulum. Furin-cleaved E3 remains associated with spike glycoprotein E1 and mediates pH protection of the latter during the transport via the secretory pathway. After virion release from the host cell, the assembly protein E3 is gradually released in the extracellular space. Functionally, plays a role in viral attachment to target host cell, by binding to the cell receptor LDLRAD3. Synthesized as a p62 precursor which is processed by furin at the cell membrane just before virion budding, giving rise to E2-E1 heterodimer. The p62-E1 heterodimer is stable, whereas E2-E1 is unstable and dissociate at low pH. p62 is processed at the last step, presumably to avoid E1 fusion activation before its final export to cell surface. E2 C-terminus contains a transitory transmembrane that would be disrupted by palmitoylation, resulting in reorientation of the C-terminal tail from lumenal to cytoplasmic side. This step is critical since E2 C-terminus is involved in budding by interacting with capsid proteins. This release of E2 C-terminus in cytoplasm occurs lately in protein export, and precludes premature assembly of particles at the endoplasmic reticulum membrane. Acts as a viroporin that participates in virus glycoprotein processing and transport to the plasma membrane, cell permeabilization and budding of viral particles. Disrupts the calcium homeostasis of the cell, probably at the endoplasmic reticulum level. This leads to cytoplasmic calcium elevation. Because of its lipophilic properties, the 6K protein is postulated to influence the selection of lipids that interact with the transmembrane domains of the glycoproteins, which, in turn, affects the deformability of the bilayer required for the extreme curvature that occurs as budding proceeds. Present in low amount in virions, about 3% compared to viral glycoproteins. In terms of biological role, class II viral fusion protein. Fusion activity is inactive as long as E1 is bound to E2 in mature virion. After virus attachment to cell receptor LDLRAD3 and endocytosis, acidification of the endosome induce dissociation of E1/E2 heterodimer and concomitant trimerization of the E1 subunits. This E1 trimer is fusion active, and promotes release of viral nucleocapsid in cytoplasm after endosome and viral membrane fusion. Efficient fusion requires the presence of cholesterol and sphingolipid in the target membrane. The protein is Structural polyprotein of Venezuelan equine encephalitis virus (strain P676) (VEEV).